We begin with the raw amino-acid sequence, 535 residues long: MVNIILLIVSALIGLILGYALISIRLKSAKEAAELTLLNAEQEAVDIRGKAEVDAEHIKKTAKRESKANRKELLLKAKEEARKYREEIEQEFKSERQELKQLETRLAERSLTLDRKDENLSSKEKVLDSKEQSLTDKSKHIDERQLQVEKLEEEKKAELEKVAAMTIAEAREVILMETENKLTHEIATRIRDAERDIKDRTVKTAKDLLAQAMQRLAGEYVTEQTITSVHLPDDNMKGRIIGREGRNIRTLESLTGIDVIIDDTPEVVILSGFDPIRREIARMTLESLIADGRIHPARIEELVEKNRLEMDNRIREYGEAAAYEIGAPNLHPDLIKIMGRLQFRTSFGQNVLRHSVEVGKLAGILAGELGENVALARRAGFLHDMGKAIDREVEGSHVEIGMEFARKYKEHPVVVNTIASHHGDVEPDSVIAVLVAAADALSSARPGARNESMENYIKRLRDLEEIATSFDGVQNSFALQAGREIRIMVQPEKISDDQVVILSHKVREKIEHNLDYPGNIKVTVIREMRAVDYAK.

The helical transmembrane segment at 4 to 24 threads the bilayer; the sequence is IILLIVSALIGLILGYALISI. The interval 118–141 is disordered; sequence ENLSSKEKVLDSKEQSLTDKSKHI. Residues 225–285 enclose the KH domain; that stretch reads TITSVHLPDD…IRREIARMTL (61 aa). Positions 351 to 444 constitute an HD domain; sequence VLRHSVEVGK…VAAADALSSA (94 aa).

This sequence belongs to the RNase Y family.

The protein resides in the cell membrane. Functionally, endoribonuclease that initiates mRNA decay. In Streptococcus pyogenes serotype M2 (strain MGAS10270), this protein is Ribonuclease Y.